Consider the following 205-residue polypeptide: MSYNLENQVIALAGVFQSAALVDQLAKQGTVAPTSYECSLKSLLKVDATSTLDVYGDIYGLQLGLKELIAVLERKQDRKKVDVVRYALTLLYLEGKVNKRGDMLDVMSQRIAQINTQTLHFEPTHTNIISAFASLYSDTISTFPQRIQVTGDPRFLRVDENADKIRALLLAGIRAAVLWRQVGGRRWKLFFMRKKILQIANGMLR.

This sequence belongs to the HflD family.

It is found in the cytoplasm. The protein resides in the cell inner membrane. This chain is High frequency lysogenization protein HflD homolog, found in Hahella chejuensis (strain KCTC 2396).